Reading from the N-terminus, the 131-residue chain is Large-conductance mechanosensitive channel (131 aa).

A run of 2 helical transmembrane segments spans residues 14 to 34 (VMDM…VTSL) and 71 to 91 (GNFI…FLLV).

It belongs to the MscL family. As to quaternary structure, homopentamer.

Its subcellular location is the cell inner membrane. Its function is as follows. Channel that opens in response to stretch forces in the membrane lipid bilayer. May participate in the regulation of osmotic pressure changes within the cell. The protein is Large-conductance mechanosensitive channel of Dinoroseobacter shibae (strain DSM 16493 / NCIMB 14021 / DFL 12).